We begin with the raw amino-acid sequence, 47 residues long: PhoP/PhoQ regulator MgrB (47 aa).

Residues 6 to 26 form a helical membrane-spanning segment; that stretch reads WVVLGIVVVVCLLLWAQVFNI.

The protein belongs to the MgrB family. As to quaternary structure, may form homooligomers. Probably interacts with the periplasmic domain of PhoQ.

It is found in the cell inner membrane. In terms of biological role, phoP-regulated transcription is redox-sensitive, being activated when the periplasm becomes more reducing. MgrB acts between DsbA/DsbB and PhoP/PhoQ in this pathway. Represses PhoP/PhoQ signaling, possibly by binding to the periplasmic domain of PhoQ, altering its activity and that of downstream effector PhoP. This is PhoP/PhoQ regulator MgrB from Salmonella agona (strain SL483).